Consider the following 182-residue polypeptide: Early nodulin-like protein 14 (182 aa).

The signal sequence occupies residues 1 to 28 (MFLSASMASSSLHVAIFSLIFLFSLAAA). Residues 29–133 (NEVTVGGKSG…GQKLSLVVIS (105 aa)) form the Phytocyanin domain. The cysteines at positions 87 and 121 are disulfide-linked. Asn-88 and Asn-95 each carry an N-linked (GlcNAc...) asparagine glycan. Ser-160 carries the GPI-anchor amidated serine lipid modification. A propeptide spans 161-182 (GSVRLGGCYVVLGLVLGLCAWF) (removed in mature form).

This sequence belongs to the early nodulin-like (ENODL) family. In terms of assembly, interacts strongly and specifically with the extracellular domain of FERONIA at the synergid cell surface. In terms of tissue distribution, mostly expressed in seedlings and flowers, and, to a lower extent, in roots, stems and seeds, but barely in leaves.

Its subcellular location is the cell membrane. Functionally, may act as a carbohydrate transporter. Required, together with ENODL11, ENODL12, ENODL13, ENODL14 and ENODL15, for male-female communication and pollen tube reception and burst at the synergid cell surface of the female gametophyte. The polypeptide is Early nodulin-like protein 14 (Arabidopsis thaliana (Mouse-ear cress)).